A 142-amino-acid chain; its full sequence is Large ribosomal subunit protein uL13 (142 aa).

Belongs to the universal ribosomal protein uL13 family. Part of the 50S ribosomal subunit.

Its function is as follows. This protein is one of the early assembly proteins of the 50S ribosomal subunit, although it is not seen to bind rRNA by itself. It is important during the early stages of 50S assembly. This is Large ribosomal subunit protein uL13 from Psychrobacter sp. (strain PRwf-1).